We begin with the raw amino-acid sequence, 269 residues long: Eukaryotic translation initiation factor 3 subunit G-1 (269 aa).

In terms of domain architecture, RRM spans 188 to 266 (AAIRISNLSE…LILSVEWSKP (79 aa)).

It belongs to the eIF-3 subunit G family. Component of the eukaryotic translation initiation factor 3 (eIF-3) complex. The eIF-3 complex interacts with pix.

The protein localises to the cytoplasm. In terms of biological role, RNA-binding component of the eukaryotic translation initiation factor 3 (eIF-3) complex, which is involved in protein synthesis of a specialized repertoire of mRNAs and, together with other initiation factors, stimulates binding of mRNA and methionyl-tRNAi to the 40S ribosome. The eIF-3 complex specifically targets and initiates translation of a subset of mRNAs involved in cell proliferation. This subunit can bind 18S rRNA. This chain is Eukaryotic translation initiation factor 3 subunit G-1, found in Drosophila virilis (Fruit fly).